Consider the following 366-residue polypeptide: 5-formaminoimidazole-4-carboxamide-1-(beta)-D-ribofuranosyl 5'-monophosphate synthetase (366 aa).

2 residues coordinate 5-amino-1-(5-phospho-beta-D-ribosyl)imidazole-4-carboxamide: H27 and S96. Residues 131–357 enclose the ATP-grasp domain; it reads RKWLEDAGVP…IAREIKEAVK (227 aa). Residues 154–208 and E239 each bind ATP; that span reads PVIV…VRFY. N263 lines the 5-amino-1-(5-phospho-beta-D-ribosyl)imidazole-4-carboxamide pocket. E302 and E315 together coordinate Mg(2+).

It belongs to the phosphohexose mutase family. It depends on Mg(2+) as a cofactor. Mn(2+) is required as a cofactor.

The catalysed reaction is 5-amino-1-(5-phospho-beta-D-ribosyl)imidazole-4-carboxamide + formate + ATP = 5-formamido-1-(5-phospho-D-ribosyl)imidazole-4-carboxamide + ADP + phosphate. Its pathway is purine metabolism; IMP biosynthesis via de novo pathway; 5-formamido-1-(5-phospho-D-ribosyl)imidazole-4-carboxamide from 5-amino-1-(5-phospho-D-ribosyl)imidazole-4-carboxamide (formate route): step 1/1. Catalyzes the ATP- and formate-dependent formylation of 5-aminoimidazole-4-carboxamide-1-beta-d-ribofuranosyl 5'-monophosphate (AICAR) to 5-formaminoimidazole-4-carboxamide-1-beta-d-ribofuranosyl 5'-monophosphate (FAICAR) in the absence of folates. The chain is 5-formaminoimidazole-4-carboxamide-1-(beta)-D-ribofuranosyl 5'-monophosphate synthetase from Korarchaeum cryptofilum (strain OPF8).